Reading from the N-terminus, the 204-residue chain is Guanylate kinase (204 aa).

A Guanylate kinase-like domain is found at 18–196; the sequence is PKLFTISAPA…SYEILKSIFI (179 aa). 25 to 32 is a binding site for ATP; sequence APAGAGKT.

It belongs to the guanylate kinase family.

The protein resides in the cytoplasm. It catalyses the reaction GMP + ATP = GDP + ADP. Functionally, essential for recycling GMP and indirectly, cGMP. This chain is Guanylate kinase, found in Chlamydia felis (strain Fe/C-56) (Chlamydophila felis).